We begin with the raw amino-acid sequence, 997 residues long: Autophagy-related protein 9 (997 aa).

At 1 to 318 (MERDEYQLPN…DVYNYYLGNG (318 aa)) the chain is on the cytoplasmic side. S19 is subject to Phosphoserine. A compositionally biased stretch (polar residues) spans 29–39 (VNPSLNSQEMS). Positions 29–88 (VNPSLNSQEMSNFPLPDIERGSSLLHSTNDSREDVDENDLRVPESDQGTSTEEEDEVDEE) are disordered. Positions 79 to 88 (TEEEDEVDEE) are enriched in acidic residues. Glycyl lysine isopeptide (Lys-Gly) (interchain with G-Cter in ubiquitin) cross-links involve residues K113 and K121. Phosphoserine is present on S122. Disordered stretches follow at residues 127-159 (LVEGSTDDSVPKVGQLSSEEEEDNEFINNDGFD) and 214-234 (HHDKDKSANNGPRNINGNQKH). K138 participates in a covalent cross-link: Glycyl lysine isopeptide (Lys-Gly) (interchain with G-Cter in ubiquitin). Phosphoserine is present on residues S143 and S144. Positions 144 to 159 (SEEEEDNEFINNDGFD) are enriched in acidic residues. Polar residues predominate over residues 221–233 (ANNGPRNINGNQK). Residues 319 to 339 (FYCIILEKILNICTLLFVVFV) form a helical membrane-spanning segment. The Lumenal segment spans residues 340-376 (STYMGHCVDYSKLPTSHRVSDIIIDKCYSNSITGFTK). The helical transmembrane segment at 377 to 397 (FFLWMFYFFVILKIVQLYFDV) threads the bilayer. The Cytoplasmic portion of the chain corresponds to 398 to 538 (QKLSELQNFY…EELQKRFMLA (141 aa)). Residues 539–559 (GFLNIILAPFLVTYFVLLYFF) lie within the membrane without spanning it. Topologically, residues 560–620 (RYFNEYKTSP…DQFPKEKTNL (61 aa)) are cytoplasmic. The chain crosses the membrane as a helical span at residues 621–641 (FLKFVSFICGSFVAILAFLTV). The Lumenal segment spans residues 642–656 (FDPENFLNFEITSDR). Residue S657 is modified to Phosphoserine. The helical transmembrane segment at 657–677 (SVIFYITILGAIWSVSRNTIT) threads the bilayer. At 678 to 723 (QEYHVFDPEETLKELYEYTHYLPKEWEGRYHKEEIKLEFCKLYNLR) the chain is on the cytoplasmic side. K701 participates in a covalent cross-link: Glycyl lysine isopeptide (Lys-Gly) (interchain with G-Cter in ubiquitin). Residues 724–744 (IVILLRELTSLMITPFVLWFS) lie within the membrane without spanning it. Residues 745-997 (LPSSAGRIVD…EYYKKSDVGR (253 aa)) lie on the Cytoplasmic side of the membrane. 2 positions are modified to phosphoserine: S787 and S792. Position 794 is a phosphothreonine (T794). S802 carries the post-translational modification Phosphoserine. The residue at position 804 (T804) is a Phosphothreonine. A phosphoserine mark is found at S831, S842, S864, S948, and S969.

This sequence belongs to the ATG9 family. In terms of assembly, homotrimer; forms a homotrimer with a central pore that forms a path between the two membrane leaflets. Interacts with ATG23 and ATG27 to form a cycling complex for trafficking to the PAS. Interacts (via N-terminus) with ATG11, required for recruitment of ATG9 to the PAS for the Cvt pathway during nutrient-rich conditions. Interacts (via N-terminus) with ATG17; required for recruitment to the PAS during autophagy and starved conditions. Interacts with ATG2 and ATG18; required for the retrieval of ATG9 from the PAS to the cytoplasmic pool. Interacts with ATG41. Interacts with the conserved oligomeric Golgi (COG) complex subunits COG3 and COG4. Interacts with TRS85. In terms of processing, phosphorylated by ATG1; phosphorylation is required for autophagy and cytoplasm to vacuole transport (Cvt) vesicle formation. Phosphorylation by ATG1 regulates ATG18 interaction and preautophagosome elongation. Phosphorylation at Ser-122 is required for selective autophagy by regulating anterograde trafficking and interaction with ATG23 and ATG27. Phosphorylation at Ser-122 prevents ubiquitination by the SCF(MET30) complex. Post-translationally, ubiquitinated by the SCF(MET30) complex in normal conditions, leading to its degradation by the proteasome, thereby preventing inappropriate induction of autophagy. Ubiquitination by the SCF(MET30) complex is prevented by phosphorylation at Ser-122.

The protein resides in the preautophagosomal structure membrane. It localises to the cytoplasmic vesicle membrane. Its subcellular location is the golgi apparatus membrane. It is found in the endoplasmic reticulum membrane. The protein localises to the mitochondrion membrane. It carries out the reaction a 1,2-diacyl-sn-glycero-3-phosphocholine(in) = a 1,2-diacyl-sn-glycero-3-phosphocholine(out). It catalyses the reaction a 1,2-diacyl-sn-glycero-3-phospho-L-serine(in) = a 1,2-diacyl-sn-glycero-3-phospho-L-serine(out). The enzyme catalyses a 1,2-diacyl-sn-glycero-3-phosphoethanolamine(in) = a 1,2-diacyl-sn-glycero-3-phosphoethanolamine(out). The catalysed reaction is a 1,2-diacyl-sn-glycero-3-phospho-(1D-myo-inositol-3-phosphate)(in) = a 1,2-diacyl-sn-glycero-3-phospho-(1D-myo-inositol-3-phosphate)(out). Functionally, phospholipid scramblase involved in autophagy and cytoplasm to vacuole transport (Cvt) vesicle formation. Cycles between the preautophagosomal structure/phagophore assembly site (PAS) and the cytoplasmic vesicle pool and supplies membrane for the growing autophagosome. Lipid scramblase activity plays a key role in preautophagosomal structure/phagophore assembly by distributing the phospholipids that arrive through ATG2 from the cytoplasmic to the luminal leaflet of the bilayer, thereby driving autophagosomal membrane expansion. Required for mitophagy. Also involved in endoplasmic reticulum-specific autophagic process and is essential for the survival of cells subjected to severe ER stress. Different machineries are required for anterograde trafficking to the PAS during either the Cvt pathway or bulk autophagy and for retrograde trafficking. Recruits vesicle-tethering proteins TRS85 and YPT1 to the autophagosome formation site. Also recruits ATG23 and ATG8 to the PAS. This Saccharomyces cerevisiae (strain YJM789) (Baker's yeast) protein is Autophagy-related protein 9.